Reading from the N-terminus, the 786-residue chain is DNA ligase (786 aa).

Residues 32-36 (DAEYD), 81-82 (SL), and glutamate 121 each bind NAD(+). Lysine 123 acts as the N6-AMP-lysine intermediate in catalysis. The NAD(+) site is built by arginine 144, glutamate 181, lysine 297, and lysine 321. Residues cysteine 415, cysteine 418, cysteine 445, and cysteine 451 each coordinate Zn(2+). The 84-residue stretch at 703–786 (AEGLPLAGQT…EQLKSYGIEA (84 aa)) folds into the BRCT domain.

Belongs to the NAD-dependent DNA ligase family. LigA subfamily. It depends on Mg(2+) as a cofactor. Requires Mn(2+) as cofactor.

The catalysed reaction is NAD(+) + (deoxyribonucleotide)n-3'-hydroxyl + 5'-phospho-(deoxyribonucleotide)m = (deoxyribonucleotide)n+m + AMP + beta-nicotinamide D-nucleotide.. Functionally, DNA ligase that catalyzes the formation of phosphodiester linkages between 5'-phosphoryl and 3'-hydroxyl groups in double-stranded DNA using NAD as a coenzyme and as the energy source for the reaction. It is essential for DNA replication and repair of damaged DNA. The protein is DNA ligase of Ectopseudomonas mendocina (strain ymp) (Pseudomonas mendocina).